We begin with the raw amino-acid sequence, 147 residues long: Histone-lysine N-methyltransferase, H3 lysine-37 specific (147 aa).

In terms of domain architecture, SET spans 8–116; that stretch reads SPLEIRDTER…TNEELCISYG (109 aa).

This sequence belongs to the class V-like SAM-binding methyltransferase superfamily. As to quaternary structure, homodimer.

The protein localises to the cytoplasm. The protein resides in the nucleus. The catalysed reaction is L-lysyl(37)-[histone H3] + S-adenosyl-L-methionine = N(6)-methyl-L-lysyl(37)-[histone H3] + S-adenosyl-L-homocysteine + H(+). It carries out the reaction N(6)-methyl-L-lysyl(37)-[histone H3] + S-adenosyl-L-methionine = N(6),N(6)-dimethyl-L-lysyl(37)-[histone H3] + S-adenosyl-L-homocysteine + H(+). The enzyme catalyses N(6),N(6)-dimethyl-L-lysyl(37)-[histone H3] + S-adenosyl-L-methionine = N(6),N(6),N(6)-trimethyl-L-lysyl(37)-[histone H3] + S-adenosyl-L-homocysteine + H(+). Functionally, histone lysine methyltransferase that specifically mono-, di-, and trimethylates 'Lys-37' of histone H3 to regulate sporulation. This chain is Histone-lysine N-methyltransferase, H3 lysine-37 specific, found in Schizosaccharomyces pombe (strain 972 / ATCC 24843) (Fission yeast).